A 167-amino-acid chain; its full sequence is Putative defense protein Hdd11-like (167 aa).

The N-terminal stretch at methionine 1–alanine 18 is a signal peptide. One can recognise a Reelin domain in the interval tyrosine 19–histidine 167. Cysteines 28 and 105 form a disulfide.

This sequence belongs to the insect defense protein family. In terms of tissue distribution, in larvae, high expression in the fat body and low expression in midgut, hemocytes and malpighian tubules. No expression in silkgland.

Its subcellular location is the secreted. Functionally, may have antimicrobial activity. This Samia ricini (Indian eri silkmoth) protein is Putative defense protein Hdd11-like.